Here is a 103-residue protein sequence, read N- to C-terminus: Large ribosomal subunit protein uL24 (103 aa).

Belongs to the universal ribosomal protein uL24 family. Part of the 50S ribosomal subunit.

Its function is as follows. One of two assembly initiator proteins, it binds directly to the 5'-end of the 23S rRNA, where it nucleates assembly of the 50S subunit. One of the proteins that surrounds the polypeptide exit tunnel on the outside of the subunit. The protein is Large ribosomal subunit protein uL24 of Lachnospira eligens (strain ATCC 27750 / DSM 3376 / VPI C15-48 / C15-B4) (Eubacterium eligens).